Reading from the N-terminus, the 471-residue chain is Ubiquitin carboxyl-terminal hydrolase calypso (471 aa).

Residues 45 to 276 (GWLELESDPG…IRFNLMAVVP (232 aa)) form the UCH catalytic domain. The Nucleophile role is filled by cysteine 131. Residue histidine 213 is the Proton donor of the active site. The tract at residues 307 to 326 (DEQGESGNGDSQRPDTPTTL) is disordered. Residues 314-326 (NGDSQRPDTPTTL) show a composition bias toward polar residues. The ULD domain maps to 375-403 (NYDKFICTFLSMLAHQGVLGELVSQHLLP). Residues 405 to 471 (KKVSGQGAAN…KGRNKCRKRK (67 aa)) are positively charged C-terminal tail required for binding nucleosomes. Residues 412–471 (AANRISKQSNTASAGGSTTGASASTPKTQQQQAAAAKNGKSPSKTPGRRRKGRNKCRKRK) are disordered. Residues 422–447 (TASAGGSTTGASASTPKTQQQQAAAA) are compositionally biased toward low complexity. Basic residues predominate over residues 457-471 (PGRRRKGRNKCRKRK).

This sequence belongs to the peptidase C12 family. BAP1 subfamily. As to quaternary structure, catalytic component of the polycomb repressive deubiquitinase (PR-DUB) complex, at least composed of caly/calypso, Asx and sba (MBD5/6 homolog). The PR-DUB complex associates with nucleosomes to mediate deubiquitination of histone H2AK118ub1 substrates; the association requires the positively charged C-terminal tail of caly, probably due to direct binding of DNA. Interacts (via ULD domain) with Asx (via DEUBAD domain); the interaction produces a stable heterodimer with a composite binding site for ubiquitin. Homodimerizes (via coiled-coil hinge-region between the UCH and ULD domains) to mediate assembly of 2 copies of the caly-Asx heterodimer into a bisymmetric tetramer; dimerization enhances PR-DUB association with nucleosomes.

It localises to the nucleus. It catalyses the reaction Thiol-dependent hydrolysis of ester, thioester, amide, peptide and isopeptide bonds formed by the C-terminal Gly of ubiquitin (a 76-residue protein attached to proteins as an intracellular targeting signal).. Catalytic component of the polycomb repressive deubiquitinase (PR-DUB) complex, a complex that specifically mediates deubiquitination of histone H2A monoubiquitinated at 'Lys-119' (H2AK118ub1). Mediates bisymmetric organization of the PR-DUB complex and is involved in association with nucleosomes to mediate deubiquitination. Does not deubiquitinate monoubiquitinated histone H2B. Required to maintain the transcriptionally repressive state of homeotic genes throughout development. The PR-DUB complex has weak or no activity toward 'Lys-48'- and 'Lys-63'-linked polyubiquitin chains. Polycomb group (PcG) protein. This Drosophila sechellia (Fruit fly) protein is Ubiquitin carboxyl-terminal hydrolase calypso.